We begin with the raw amino-acid sequence, 325 residues long: uncharacterized protein (325 aa).

The HD domain occupies 49-151 (RYEHSIGVML…ELCADRTDYT (103 aa)).

This is an uncharacterized protein from Bacillus subtilis (strain 168).